The primary structure comprises 872 residues: Cellulose synthase catalytic subunit [UDP-forming] (872 aa).

4 helical membrane passes run 30 to 50, 151 to 171, 173 to 193, and 230 to 250; these read SAFS…FIPL, ILGI…TQPF, PLAQ…VRRM, and LVCG…LVLG. Positions 271 to 364 are catalytic subdomain A; sequence LWPSVDIFVP…FVSIFDCDHV (94 aa). The active site involves aspartate 313. Positions 360 and 362 each coordinate substrate. Positions 441-501 are catalytic subdomain B; it reads KPLDEIGGIA…GQRIRWARGM (61 aa). The active site involves aspartate 457. 5 helical membrane-spanning segments follow: residues 525 to 545, 547 to 567, 592 to 612, 640 to 660, and 668 to 688; these read VNAM…TAPL, FLLL…LFVL, IYET…LINP, IFLV…YFYG, and VVVS…AVAV. The 97-residue stretch at 694–790 folds into the PilZ domain; it reads QVRRSHRVEM…QHIDFVQCTF (97 aa). The helical transmembrane segment at 833 to 853 threads the bilayer; that stretch reads SVKGIFRVLTSLVSWVVSFIP.

This sequence belongs to the glycosyltransferase 2 family. It depends on Mg(2+) as a cofactor.

It is found in the cell inner membrane. It catalyses the reaction [(1-&gt;4)-beta-D-glucosyl](n) + UDP-alpha-D-glucose = [(1-&gt;4)-beta-D-glucosyl](n+1) + UDP + H(+). It participates in glycan metabolism; bacterial cellulose biosynthesis. Its activity is regulated as follows. Activated by bis-(3'-5') cyclic diguanylic acid (c-di-GMP). Functionally, catalytic subunit of cellulose synthase. It polymerizes uridine 5'-diphosphate glucose to cellulose, which is produced as an extracellular component for mechanical and chemical protection at the onset of the stationary phase, when the cells exhibit multicellular behavior (rdar morphotype). Coexpression of cellulose and thin aggregative fimbriae leads to a hydrophobic network with tightly packed cells embedded in a highly inert matrix. The protein is Cellulose synthase catalytic subunit [UDP-forming] (bcsA) of Escherichia coli O157:H7.